A 695-amino-acid chain; its full sequence is Exocyst complex component EXO70C2 (695 aa).

Positions 1 to 36 (MEKNDKDPDHDDKSKGDEKGDVVSDAHPSDDAHHQD) are enriched in basic and acidic residues. Disordered regions lie at residues 1-71 (MEKN…EEAP) and 210-229 (VVTD…QDHQ). Threonine 212 bears the Phosphothreonine mark. Serine 215 and serine 217 each carry phosphoserine. Position 446 is a phosphothreonine (threonine 446). Residues serine 494 and serine 605 each carry the phosphoserine modification.

This sequence belongs to the EXO70 family. As to quaternary structure, interacts with ROH1A and ROH1D independently of its phosphorylation status. In terms of processing, phosphorylation on Ser and Thr residues promotes its ability to repress pollen tube growth and to regulate cellular architecture at the pollen tube tip. As to expression, expressed in anthers, pollen and root trichoblast cells. Also observed in anther tapetum.

The protein localises to the cytoplasm. Its function is as follows. Required for optimal tip growth of pollen tube; dose-dependent negative regulator of exocyst function in pollen tube growth and cellular architecture at the pollen tube tip, probably by modulating membrane trafficking and exocytosis dynamics. This Arabidopsis thaliana (Mouse-ear cress) protein is Exocyst complex component EXO70C2.